The chain runs to 948 residues: 3-hydroxy-3-methylglutaryl-coenzyme A reductase (948 aa).

Transmembrane regions (helical) follow at residues 9 to 25 (LLFF…VLLI), 55 to 71 (VIIF…VLTC), 96 to 112 (LILF…VLFV), 124 to 140 (TSVF…FIVL), 207 to 223 (IIYI…FMRI), and 286 to 302 (CWST…ILHL). Asn316 is a glycosylation site (N-linked (GlcNAc...) asparagine). Residues 347-363 (VINANLVVYLFLGLFLF) traverse the membrane as a helical segment. Positions 364 to 466 (KRIRLNKPIN…MLTEKIKQGL (103 aa)) are linker. A glycan (N-linked (GlcNAc...) asparagine) is linked at Asn430. The tract at residues 467–948 (GHELSDTEIL…VNPEISHYTM (482 aa)) is catalytic. Active-site charge relay system residues include Glu567, Lys699, and Asp777. His869 acts as the Proton donor in catalysis. Residue Asn895 is glycosylated (N-linked (GlcNAc...) asparagine).

Belongs to the HMG-CoA reductase family.

It localises to the endoplasmic reticulum membrane. The protein resides in the peroxisome membrane. The catalysed reaction is (R)-mevalonate + 2 NADP(+) + CoA = (3S)-3-hydroxy-3-methylglutaryl-CoA + 2 NADPH + 2 H(+). It functions in the pathway metabolic intermediate biosynthesis; (R)-mevalonate biosynthesis; (R)-mevalonate from acetyl-CoA: step 3/3. Functionally, this transmembrane glycoprotein is involved in the control of cholesterol and nonsterol isoprenoid compounds biosynthesis. It is the rate-limiting enzyme of sterol biosynthesis. This is 3-hydroxy-3-methylglutaryl-coenzyme A reductase from Schistosoma mansoni (Blood fluke).